The primary structure comprises 227 residues: 2-C-methyl-D-erythritol 4-phosphate cytidylyltransferase (227 aa).

It belongs to the IspD/TarI cytidylyltransferase family. IspD subfamily.

It carries out the reaction 2-C-methyl-D-erythritol 4-phosphate + CTP + H(+) = 4-CDP-2-C-methyl-D-erythritol + diphosphate. It functions in the pathway isoprenoid biosynthesis; isopentenyl diphosphate biosynthesis via DXP pathway; isopentenyl diphosphate from 1-deoxy-D-xylulose 5-phosphate: step 2/6. Functionally, catalyzes the formation of 4-diphosphocytidyl-2-C-methyl-D-erythritol from CTP and 2-C-methyl-D-erythritol 4-phosphate (MEP). The protein is 2-C-methyl-D-erythritol 4-phosphate cytidylyltransferase of Petrotoga mobilis (strain DSM 10674 / SJ95).